The chain runs to 230 residues: MKRGKKYLEAVKLYDKSVAYTGLEAVELAKKTSVAKFDATVEVAFRLNVDPRKADQNLRGAISLPHGTGKTVRVVVIAKPEKAKEALAAGALEAGDVELIDKIGKGWFDFDVMVATPDMMAQLGKLGRVLGPKGLMPNPKTGTVTLDVAKAVEEIKAGKIEYRTDKVGNIHAPIGKVSFDSNKLHENMLAIYNQLVRIKPATVKGTYIKKIALSTTMGPGIMVEENNIKK.

This sequence belongs to the universal ribosomal protein uL1 family. As to quaternary structure, part of the 50S ribosomal subunit.

Binds directly to 23S rRNA. The L1 stalk is quite mobile in the ribosome, and is involved in E site tRNA release. Functionally, protein L1 is also a translational repressor protein, it controls the translation of the L11 operon by binding to its mRNA. This chain is Large ribosomal subunit protein uL1, found in Acholeplasma laidlawii (strain PG-8A).